Consider the following 395-residue polypeptide: S-adenosylmethionine synthase 2 (395 aa).

Residue Glu9 participates in Mg(2+) binding. An ATP-binding site is contributed by His15. K(+) is bound at residue Glu43. Positions 56 and 99 each coordinate L-methionine. Residues 167–169 (DGK), 235–238 (SGRF), Asp246, 252–253 (RK), Ala269, Lys273, and Lys277 contribute to the ATP site. Asp246 provides a ligand contact to L-methionine. Lys277 contacts L-methionine.

The protein belongs to the AdoMet synthase family. In terms of assembly, homotetramer. It depends on Mn(2+) as a cofactor. Mg(2+) is required as a cofactor. Requires Co(2+) as cofactor. The cofactor is K(+).

It localises to the cytoplasm. It catalyses the reaction L-methionine + ATP + H2O = S-adenosyl-L-methionine + phosphate + diphosphate. The protein operates within amino-acid biosynthesis; S-adenosyl-L-methionine biosynthesis; S-adenosyl-L-methionine from L-methionine: step 1/1. Functionally, catalyzes the formation of S-adenosylmethionine from methionine and ATP. The reaction comprises two steps that are both catalyzed by the same enzyme: formation of S-adenosylmethionine (AdoMet) and triphosphate, and subsequent hydrolysis of the triphosphate. The protein is S-adenosylmethionine synthase 2 (METK2) of Suaeda salsa (Seepweed).